The chain runs to 122 residues: Large ribosomal subunit protein uL14 (122 aa).

It belongs to the universal ribosomal protein uL14 family. Part of the 50S ribosomal subunit. Forms a cluster with proteins L3 and L19. In the 70S ribosome, L14 and L19 interact and together make contacts with the 16S rRNA in bridges B5 and B8.

Functionally, binds to 23S rRNA. Forms part of two intersubunit bridges in the 70S ribosome. The chain is Large ribosomal subunit protein uL14 from Bacillus velezensis (strain DSM 23117 / BGSC 10A6 / LMG 26770 / FZB42) (Bacillus amyloliquefaciens subsp. plantarum).